The chain runs to 439 residues: Probable anion transporter 7 (439 aa).

A signal peptide spans 1–28; it reads MTALTRMKFPKRYVIVLLTFICTNVCYI. 11 helical membrane-spanning segments follow: residues 53-73, 81-101, 104-124, 143-163, 167-187, 232-252, 280-300, 312-332, 338-358, 367-387, and 412-432; these read MILS…GWAA, VLLL…LDPK, VILV…FPAI, LTTS…PSLV, GAQS…VIWL, IIFS…HYAL, LPYF…DHLI, KLLN…LPLF, TVLC…GFAV, FAGI…IVGV, and TVFF…LIFS.

Belongs to the major facilitator superfamily. Sodium/anion cotransporter (TC 2.A.1.14) family.

Its subcellular location is the cell membrane. In terms of biological role, probable anion transporter. The protein is Probable anion transporter 7 (PHT4;7) of Oryza sativa subsp. japonica (Rice).